The following is a 772-amino-acid chain: Potassium transporter 24 (772 aa).

The Cytoplasmic segment spans residues 1-23 (MDVEGGGAAARRKGGWWWWREEA). The chain crosses the membrane as a helical span at residues 24–44 (VLAYQSLGVVYGEVAAAPLYV). Residues 45-66 (YRSAFAGGDIEHSAGNEEIYGA) are Extracellular-facing. Residues 67-87 (LSLVFWTLTLVPLAKYVLLVL) form a helical membrane-spanning segment. The Cytoplasmic portion of the chain corresponds to 88–150 (RADDAGEGGT…ALERHRVLQR (63 aa)). Residues 151–171 (LLLLLALLGTCMVIGDGVLTP) traverse the membrane as a helical segment. Topologically, residues 172–192 (AVSVFSAVSGLELSMDKDQHK) are extracellular. The helical transmembrane segment at 193 to 213 (YILLPITCVILVCLFALQHYG) threads the bilayer. Topologically, residues 214 to 216 (THR) are cytoplasmic. Residues 217–237 (VGFLFAPIVCLWLLCISIIGV) form a helical membrane-spanning segment. The Extracellular segment spans residues 238–265 (YNIIHWNPHVYQALSPYYMYKFLRKTQT). A helical transmembrane segment spans residues 266-286 (GGWMSLGGILLCVTGSEAMYA). The Cytoplasmic portion of the chain corresponds to 287–298 (DLGHFTQNSIKM). The chain crosses the membrane as a helical span at residues 299–319 (AFTLLVYPALVLAYMGQAAYI). Over 320 to 344 (SRHHNFEDGSHIGFYVSVPEKIRWP) the chain is Extracellular. A helical transmembrane segment spans residues 345–365 (VLGIAILASVVGSQAIITGTF). The Cytoplasmic segment spans residues 366–392 (SIIKQCSSLNCFPRVKIVHTSSTVHGQ). A helical transmembrane segment spans residues 393-413 (IYIPEINWILMILCLSVTIGF). The Extracellular portion of the chain corresponds to 414–423 (RDTKHLTNAQ). Residues 424-444 (GLAVITVMLVTTCLMSLVILL) traverse the membrane as a helical segment. At 445–449 (CWNKS) the chain is on the cytoplasmic side. A helical transmembrane segment spans residues 450-470 (IVYALSFLLFFGAIEVIYFAA). The Extracellular portion of the chain corresponds to 471-477 (SLVKFHE). A helical transmembrane segment spans residues 478–498 (GAWVPVTLSFIFMMVMCVWHY). Residues 499 to 772 (GTKKKYEFDV…TVEVGMICLV (274 aa)) lie on the Cytoplasmic side of the membrane. Positions 656-684 (EEGEFDGSDSTGSSAHKEINPNTTAPKPK) are disordered.

Belongs to the HAK/KUP transporter (TC 2.A.72.3) family.

It localises to the membrane. Its function is as follows. High-affinity potassium transporter. This Oryza sativa subsp. japonica (Rice) protein is Potassium transporter 24 (HAK24).